The chain runs to 45 residues: Large ribosomal subunit protein bL36 (45 aa).

A disordered region spans residues 1–45 (MKVSSSIKADPSKGDKLVRRKGRLYVINKKDPNRKQRQAGPARKK).

The protein belongs to the bacterial ribosomal protein bL36 family.

This chain is Large ribosomal subunit protein bL36, found in Chlamydia caviae (strain ATCC VR-813 / DSM 19441 / 03DC25 / GPIC) (Chlamydophila caviae).